A 252-amino-acid chain; its full sequence is Cell division protein ZapD (252 aa).

The protein belongs to the ZapD family. In terms of assembly, interacts with FtsZ.

The protein resides in the cytoplasm. Functionally, cell division factor that enhances FtsZ-ring assembly. Directly interacts with FtsZ and promotes bundling of FtsZ protofilaments, with a reduction in FtsZ GTPase activity. This chain is Cell division protein ZapD, found in Ralstonia pickettii (strain 12J).